Here is a 457-residue protein sequence, read N- to C-terminus: Multidrug resistance protein MdtK (457 aa).

12 consecutive transmembrane segments (helical) span residues 11–31, 53–73, 93–113, 127–147, 160–180, 189–209, 243–263, 276–296, 314–334, 350–370, 387–407, and 418–438; these read LLALAIPVILAQIAQTAMGFV, IWLPAILFGHGLLLALTPVIA, WLAGFVSVLIMLVLWNAGYII, AVGYLRALLWGAPGYLFFQVA, GMVMGFIGLLVNIPVNYIFIY, GGVGCGVATAAVYWVMFLAMV, LPIALALFFEVTLFAVVALLV, IALNFSSLMFVLPMSLAAAVT, AARTGLMVGVCMATLTAIFTV, VVTLAAHLMLLAAVYQISDSI, IFYITFTAYWVLGLPSGYILA, and PAGFWIGFIIGLTSAAIMMML.

Belongs to the multi antimicrobial extrusion (MATE) (TC 2.A.66.1) family. MdtK subfamily.

The protein resides in the cell inner membrane. In terms of biological role, multidrug efflux pump that functions probably as a Na(+)/drug antiporter. This is Multidrug resistance protein MdtK from Escherichia coli O127:H6 (strain E2348/69 / EPEC).